A 93-amino-acid polypeptide reads, in one-letter code: Small ribosomal subunit protein uS17 (93 aa).

It belongs to the universal ribosomal protein uS17 family. As to quaternary structure, part of the 30S ribosomal subunit.

Functionally, one of the primary rRNA binding proteins, it binds specifically to the 5'-end of 16S ribosomal RNA. The polypeptide is Small ribosomal subunit protein uS17 (Corynebacterium aurimucosum (strain ATCC 700975 / DSM 44827 / CIP 107346 / CN-1) (Corynebacterium nigricans)).